The chain runs to 214 residues: Adenylate kinase (214 aa).

Residue 10–15 (GAGKGT) participates in ATP binding. An NMP region spans residues 30-59 (STGDMLRAAVKAGSELGLKAKEIMDAGKLV). Residues Thr31, Arg36, 57–59 (KLV), 85–88 (GFPR), and Gln92 each bind AMP. An LID region spans residues 122–159 (GRRVHAPSGRVYHVTFNPPRVEGKDDMTGEELTTRKDD). ATP-binding positions include Arg123 and 132–133 (VY). 2 residues coordinate AMP: Arg156 and Arg167. Arg200 is an ATP binding site.

The protein belongs to the adenylate kinase family. As to quaternary structure, monomer.

It is found in the cytoplasm. The enzyme catalyses AMP + ATP = 2 ADP. It participates in purine metabolism; AMP biosynthesis via salvage pathway; AMP from ADP: step 1/1. Catalyzes the reversible transfer of the terminal phosphate group between ATP and AMP. Plays an important role in cellular energy homeostasis and in adenine nucleotide metabolism. In Erwinia tasmaniensis (strain DSM 17950 / CFBP 7177 / CIP 109463 / NCPPB 4357 / Et1/99), this protein is Adenylate kinase.